A 311-amino-acid polypeptide reads, in one-letter code: Tricarboxylate transport protein, mitochondrial (311 aa).

A propeptide spans 1 to 13 (removed in mature form); it reads MPAPRAPRALAAA. Solcar repeat units lie at residues 23–111, 122–208, and 218–303; these read THPG…LSNH, TRGL…LRNW, and MNPL…VVKL. 3 consecutive transmembrane segments (helical) span residues 29–46, 86–105, and 129–143; these read ILAGGLAGGIEICITFPT, GLSSLLYGSIPKAAVRFGMF, and LGAGVAEAVVVVCPM. Ser-156 is subject to Phosphoserine. 3 helical membrane passes run 183–202, 224–241, and 278–297; these read GLTATVLKQGSNQAIRFFVM, GVFGAIAGAASVFGNTPL, and GTVPRLGRVCLDVAIVFVIY.

Belongs to the mitochondrial carrier (TC 2.A.29) family. In terms of processing, possesses a short cleavable presequence, which, however, is found to be dispensable both for targeting to mitochondria and insertion into the inner membrane. However, the presequence is required to keep SLC25A1 in a soluble state and thus in an import-competent state. Mature SLC25A1 lacking the presequence is prone to aggregation.

It is found in the mitochondrion inner membrane. It carries out the reaction (S)-malate(in) + citrate(out) = (S)-malate(out) + citrate(in). It catalyses the reaction D-threo-isocitrate(in) + citrate(out) = D-threo-isocitrate(out) + citrate(in). The catalysed reaction is citrate(out) + succinate(in) = citrate(in) + succinate(out). The enzyme catalyses cis-aconitate(in) + citrate(out) = cis-aconitate(out) + citrate(in). It carries out the reaction trans-aconitate(in) + citrate(out) = trans-aconitate(out) + citrate(in). It catalyses the reaction phosphoenolpyruvate(in) + citrate(out) = phosphoenolpyruvate(out) + citrate(in). The catalysed reaction is maleate(in) + citrate(out) = maleate(out) + citrate(in). Its function is as follows. Mitochondrial electroneutral antiporter that exports citrate from the mitochondria into the cytosol in exchange for malate. Also able to mediate the exchange of citrate for isocitrate, phosphoenolpyruvate, cis-aconitate and to a lesser extent trans-aconitate, maleate and succinate. In the cytoplasm, citrate plays important roles in fatty acid and sterol synthesis, regulation of glycolysis, protein acetylation, and other physiopathological processes. In Homo sapiens (Human), this protein is Tricarboxylate transport protein, mitochondrial (SLC25A1).